We begin with the raw amino-acid sequence, 418 residues long: 4-hydroxy-3-methylbut-2-en-1-yl diphosphate synthase (flavodoxin) (418 aa).

The [4Fe-4S] cluster site is built by C305, C308, C351, and E358.

Belongs to the IspG family. The cofactor is [4Fe-4S] cluster.

It catalyses the reaction (2E)-4-hydroxy-3-methylbut-2-enyl diphosphate + oxidized [flavodoxin] + H2O + 2 H(+) = 2-C-methyl-D-erythritol 2,4-cyclic diphosphate + reduced [flavodoxin]. The protein operates within isoprenoid biosynthesis; isopentenyl diphosphate biosynthesis via DXP pathway; isopentenyl diphosphate from 1-deoxy-D-xylulose 5-phosphate: step 5/6. Functionally, converts 2C-methyl-D-erythritol 2,4-cyclodiphosphate (ME-2,4cPP) into 1-hydroxy-2-methyl-2-(E)-butenyl 4-diphosphate. This Bartonella bacilliformis (strain ATCC 35685 / KC583 / Herrer 020/F12,63) protein is 4-hydroxy-3-methylbut-2-en-1-yl diphosphate synthase (flavodoxin).